The chain runs to 362 residues: S-adenosylmethionine:tRNA ribosyltransferase-isomerase (362 aa).

The protein belongs to the QueA family. As to quaternary structure, monomer.

It localises to the cytoplasm. It carries out the reaction 7-aminomethyl-7-carbaguanosine(34) in tRNA + S-adenosyl-L-methionine = epoxyqueuosine(34) in tRNA + adenine + L-methionine + 2 H(+). It participates in tRNA modification; tRNA-queuosine biosynthesis. Functionally, transfers and isomerizes the ribose moiety from AdoMet to the 7-aminomethyl group of 7-deazaguanine (preQ1-tRNA) to give epoxyqueuosine (oQ-tRNA). In Deinococcus radiodurans (strain ATCC 13939 / DSM 20539 / JCM 16871 / CCUG 27074 / LMG 4051 / NBRC 15346 / NCIMB 9279 / VKM B-1422 / R1), this protein is S-adenosylmethionine:tRNA ribosyltransferase-isomerase.